A 174-amino-acid polypeptide reads, in one-letter code: Crossover junction endodeoxyribonuclease RuvC (174 aa).

Catalysis depends on residues Asp-8, Glu-67, and Asp-139. Mg(2+) contacts are provided by Asp-8, Glu-67, and Asp-139.

This sequence belongs to the RuvC family. Homodimer which binds Holliday junction (HJ) DNA. The HJ becomes 2-fold symmetrical on binding to RuvC with unstacked arms; it has a different conformation from HJ DNA in complex with RuvA. In the full resolvosome a probable DNA-RuvA(4)-RuvB(12)-RuvC(2) complex forms which resolves the HJ. Requires Mg(2+) as cofactor.

Its subcellular location is the cytoplasm. It catalyses the reaction Endonucleolytic cleavage at a junction such as a reciprocal single-stranded crossover between two homologous DNA duplexes (Holliday junction).. The RuvA-RuvB-RuvC complex processes Holliday junction (HJ) DNA during genetic recombination and DNA repair. Endonuclease that resolves HJ intermediates. Cleaves cruciform DNA by making single-stranded nicks across the HJ at symmetrical positions within the homologous arms, yielding a 5'-phosphate and a 3'-hydroxyl group; requires a central core of homology in the junction. The consensus cleavage sequence is 5'-(A/T)TT(C/G)-3'. Cleavage occurs on the 3'-side of the TT dinucleotide at the point of strand exchange. HJ branch migration catalyzed by RuvA-RuvB allows RuvC to scan DNA until it finds its consensus sequence, where it cleaves and resolves the cruciform DNA. This is Crossover junction endodeoxyribonuclease RuvC from Stutzerimonas stutzeri (strain A1501) (Pseudomonas stutzeri).